The chain runs to 274 residues: Probable formate transporter (274 aa).

The next 7 membrane-spanning stretches (helical) occupy residues 31 to 51 (IVLS…AEVV), 62 to 82 (AGLV…LVVI), 118 to 138 (VFNL…TGIL), 176 to 196 (AFWR…LAIA), 200 to 220 (IIGK…IGFE), 226 to 246 (MFFI…FFMN), and 248 to 268 (LIPV…CLYW).

This sequence belongs to the FNT transporter (TC 1.A.16) family.

It localises to the cell membrane. In terms of biological role, may act as a formate transporter. In Methanothermobacter thermautotrophicus (Methanobacterium thermoformicicum), this protein is Probable formate transporter (fdhC).